Here is a 285-residue protein sequence, read N- to C-terminus: Ribosomal RNA small subunit methyltransferase H (285 aa).

Residues 34-36 (AGH), D51, F75, D96, and H103 contribute to the S-adenosyl-L-methionine site. The tract at residues 258–285 (PLVPSEKEAAQNPRARSAKLRAAEKEAP) is disordered.

This sequence belongs to the methyltransferase superfamily. RsmH family.

It localises to the cytoplasm. It catalyses the reaction cytidine(1402) in 16S rRNA + S-adenosyl-L-methionine = N(4)-methylcytidine(1402) in 16S rRNA + S-adenosyl-L-homocysteine + H(+). Specifically methylates the N4 position of cytidine in position 1402 (C1402) of 16S rRNA. The chain is Ribosomal RNA small subunit methyltransferase H from Thermus thermophilus (strain ATCC BAA-163 / DSM 7039 / HB27).